Consider the following 163-residue polypeptide: Putative 4-hydroxy-4-methyl-2-oxoglutarate aldolase (163 aa).

Substrate is bound by residues 76-79 (GDML) and R98. D99 provides a ligand contact to a divalent metal cation.

Belongs to the class II aldolase/RraA-like family. In terms of assembly, homotrimer. A divalent metal cation serves as cofactor.

It carries out the reaction 4-hydroxy-4-methyl-2-oxoglutarate = 2 pyruvate. The catalysed reaction is oxaloacetate + H(+) = pyruvate + CO2. Catalyzes the aldol cleavage of 4-hydroxy-4-methyl-2-oxoglutarate (HMG) into 2 molecules of pyruvate. Also contains a secondary oxaloacetate (OAA) decarboxylase activity due to the common pyruvate enolate transition state formed following C-C bond cleavage in the retro-aldol and decarboxylation reactions. The chain is Putative 4-hydroxy-4-methyl-2-oxoglutarate aldolase from Pseudomonas putida (strain W619).